The chain runs to 497 residues: Endoglucanase 17 (497 aa).

Positions 1–21 (MAAAGGAVLLLVLATATSVTG) are cleaved as a signal peptide. The active-site Nucleophile is Asp77. His406 is a catalytic residue. N-linked (GlcNAc...) asparagine glycosylation occurs at Asn451. Active-site residues include Asp458 and Glu467.

Belongs to the glycosyl hydrolase 9 (cellulase E) family.

It is found in the secreted. The catalysed reaction is Endohydrolysis of (1-&gt;4)-beta-D-glucosidic linkages in cellulose, lichenin and cereal beta-D-glucans.. The protein is Endoglucanase 17 (GLU13) of Oryza sativa subsp. japonica (Rice).